The chain runs to 241 residues: Spheroidene monooxygenase (241 aa).

It belongs to the CrtA family. Requires heme as cofactor.

It carries out the reaction spheroidene + 4 reduced [2Fe-2S]-[ferredoxin] + 2 O2 + 4 H(+) = spheroiden-2-one + 4 oxidized [2Fe-2S]-[ferredoxin] + 3 H2O. It catalyses the reaction spirilloxanthin + 4 reduced [2Fe-2S]-[ferredoxin] + 2 O2 + 4 H(+) = 2-oxospirilloxanthin + 4 oxidized [2Fe-2S]-[ferredoxin] + 3 H2O. The enzyme catalyses 2-oxospirilloxanthin + 4 reduced [2Fe-2S]-[ferredoxin] + 2 O2 + 4 H(+) = 2,2'-dioxospirilloxanthin + 4 oxidized [2Fe-2S]-[ferredoxin] + 3 H2O. The catalysed reaction is spheroidene + 2 reduced [2Fe-2S]-[ferredoxin] + O2 + 2 H(+) = 2-hydroxyspheroidene + 2 oxidized [2Fe-2S]-[ferredoxin] + H2O. It carries out the reaction 2-hydroxyspheroidene + 2 reduced [2Fe-2S]-[ferredoxin] + O2 + 2 H(+) = 2,2-dihydroxyspheroidene + 2 oxidized [2Fe-2S]-[ferredoxin] + H2O. It catalyses the reaction 2,2-dihydroxyspheroidene = spheroiden-2-one + H2O. The enzyme catalyses spirilloxanthin + 2 reduced [2Fe-2S]-[ferredoxin] + O2 + 2 H(+) = 2-hydroxyspirilloxanthin + 2 oxidized [2Fe-2S]-[ferredoxin] + H2O. The catalysed reaction is 2-hydroxyspirilloxanthin + 2 reduced [2Fe-2S]-[ferredoxin] + O2 + 2 H(+) = 2,2-dihydroxyspirilloxanthin + 2 oxidized [2Fe-2S]-[ferredoxin] + H2O. It carries out the reaction 2,2-dihydroxyspirilloxanthin = 2-oxospirilloxanthin + H2O. It catalyses the reaction 2-oxospirilloxanthin + 2 reduced [2Fe-2S]-[ferredoxin] + O2 + 2 H(+) = 2'-hydroxy-2-oxospirilloxanthin + 2 oxidized [2Fe-2S]-[ferredoxin] + H2O. The enzyme catalyses 2'-hydroxy-2-oxospirilloxanthin + 2 reduced [2Fe-2S]-[ferredoxin] + O2 + 2 H(+) = 2',2'-dihydroxy-2-oxospirilloxanthin + 2 oxidized [2Fe-2S]-[ferredoxin] + H2O. The catalysed reaction is 2',2'-dihydroxy-2-oxospirilloxanthin = 2,2'-dioxospirilloxanthin + H2O. Its pathway is carotenoid biosynthesis; spheroidene biosynthesis. In terms of biological role, involved in the biosynthesis of the carotenoid spheroidene. Catalyzes the introduction of one keto group at the C-2 position of spheroidene. In vitro, can also catalyze the introduction of two keto groups at the C-2 and C-2' positions of spirilloxanthin, but spirilloxanthin biosynthesis pathway is not present in R.capsulatus. The sequence is that of Spheroidene monooxygenase from Rhodobacter capsulatus (strain ATCC BAA-309 / NBRC 16581 / SB1003).